Here is a 486-residue protein sequence, read N- to C-terminus: Uridine/cytidine kinase UKL1, chloroplastic (486 aa).

A chloroplast-targeting transit peptide spans 1-47 (MPEDSSSLDYAMEKASGPHFSGLRFDGLLSSSPPNSSVVSSLRSAVS). Over residues 31–54 (SSPPNSSVVSSLRSAVSSSSPSSS) the composition is skewed to low complexity. A disordered region spans residues 31–67 (SSPPNSSVVSSLRSAVSSSSPSSSDPEAPKQPFIIGV). Residues 59–264 (PKQPFIIGVS…ITQHIHTKLG (206 aa)) form a uridine kinase region. The interval 274 to 486 (NVYVIQSTFQ…RYFGTDEEDQ (213 aa)) is uracil phosphoribosyltransferase. GTP-binding positions include lysine 298, arginine 307, and 341 to 344 (CKKL). 5-phospho-alpha-D-ribose 1-diphosphate-binding residues include arginine 351 and arginine 376. Residue arginine 396 participates in GTP binding. Residues aspartate 402, 407 to 410 (TGNS), and glutamate 473 each bind 5-phospho-alpha-D-ribose 1-diphosphate. 472 to 474 (GEF) provides a ligand contact to uracil.

This sequence in the N-terminal section; belongs to the uridine kinase family. It in the C-terminal section; belongs to the UPRTase family. As to expression, expressed in roots, leaves and stems.

It is found in the plastid. Its subcellular location is the chloroplast. It localises to the cytoplasm. The catalysed reaction is cytidine + ATP = CMP + ADP + H(+). It carries out the reaction uridine + ATP = UMP + ADP + H(+). Its pathway is pyrimidine metabolism; CTP biosynthesis via salvage pathway; CTP from cytidine: step 1/3. The protein operates within pyrimidine metabolism; UMP biosynthesis via salvage pathway; UMP from uridine: step 1/1. Functionally, involved in the pyrimidine salvage pathway. Phosphorylates uridine to uridine monophosphate (UMP). Phosphorylates cytidine to cytidine monophosphate (CMP). Does not possess uracil phosphoribosyltransferase (UPRTase) activity that catalyzes the conversion of uracil and 5-phospho-alpha-D-ribose 1-diphosphate (PRPP) to UMP and diphosphate. This chain is Uridine/cytidine kinase UKL1, chloroplastic, found in Arabidopsis thaliana (Mouse-ear cress).